Consider the following 393-residue polypeptide: Prokineticin receptor 1 (393 aa).

The Extracellular segment spans residues 1-62 (METTVGALGE…TNSRTFFAAK (62 aa)). N-linked (GlcNAc...) asparagine glycosylation is present at N11. The chain crosses the membrane as a helical span at residues 63–83 (IVIGMALVGIMLVCGIGNFIF). Residues 84–98 (ITALARYKKLRNLTN) lie on the Cytoplasmic side of the membrane. Residues 99–119 (LLIANLAISDFLVAIVCCPFE) traverse the membrane as a helical segment. The Extracellular portion of the chain corresponds to 120–146 (MDYYVVRQLSWEHGHVLCASVNYLRTV). An intrachain disulfide couples C137 to C217. The chain crosses the membrane as a helical span at residues 147 to 167 (SLYVSTNALLAIAIDRYLAIV). Residues 168–179 (HPLRPRMKCQTA) are Cytoplasmic-facing. The chain crosses the membrane as a helical span at residues 180–200 (AGLIFLVWSVSILIAIPAAYF). Topologically, residues 201–232 (TTETVLVIVERQEKIFCGQIWPVDQQFYYRSY) are extracellular. Residues 233-253 (FLLVFGLEFVGPVVAMTLCYA) form a helical membrane-spanning segment. Topologically, residues 254–282 (RVSRELWFKAVPGFQTEQIRRRLRCRRRT) are cytoplasmic. The chain crosses the membrane as a helical span at residues 283-303 (VLGLVCVLSAYVLCWAPFYGF). The Extracellular segment spans residues 304-322 (TIVRDFFPSVFVKEKHYLT). A helical membrane pass occupies residues 323-343 (AFYVVECIAMSNSMINTLCFV). The Cytoplasmic segment spans residues 344-393 (TVRNNTSKYLKRILRLQWRASPSGSKASADLDLRTTGIPATEEVDCIRLK).

It belongs to the G-protein coupled receptor 1 family. In terms of tissue distribution, expressed at high levels in the heart, skeletal muscle and pancreas. Expressed at lower levels in the brain, lung, liver and kidney.

It localises to the cell membrane. Functionally, receptor for prokineticin 1. Exclusively coupled to the G(q) subclass of heteromeric G proteins. Activation leads to mobilization of calcium, stimulation of phosphoinositide turnover and activation of p44/p42 mitogen-activated protein kinase. May play a role during early pregnancy. This chain is Prokineticin receptor 1 (Prokr1), found in Mus musculus (Mouse).